We begin with the raw amino-acid sequence, 502 residues long: Xyloglucan-specific endo-beta-1,4-glucanase BoGH5A (502 aa).

A signal peptide spans 1-32; it reads MEKQSFSDGLFSPLGIKRVIFMLVLLTTSFIS. C33 is lipidated: N-palmitoyl cysteine. C33 carries the S-diacylglycerol cysteine lipid modification. Positions 67–127 constitute a BACON domain; that stretch reads GPAEWHISTS…PDIIINVKQS (61 aa). Positions 165, 172, 251, and 296 each coordinate substrate. E297 acts as the Proton donor in catalysis. The Nucleophile role is filled by E430. Position 472 (W472) interacts with substrate.

It belongs to the glycosyl hydrolase 5 (cellulase A) family.

Its subcellular location is the cell outer membrane. The catalysed reaction is xyloglucan + H2O = xyloglucan oligosaccharides.. The protein operates within glucan metabolism; xyloglucan degradation. In terms of biological role, catalyzes endohydrolysis of 1,4-beta-D-glucosidic linkages in xyloglucan with retention of the beta-configuration of the glycosyl residues in xyloglucan degradation. Cleaves the backbone of the 3 major types of natural xyloglucans (seed galactoxyloglucan from tamarind kernel, dicot fucogalactoxyloglucan from lettuce leaves, and solanaceous arabinogalactoxyloglucan from tomato fruit), to produce xyloglucan oligosaccharides. The polypeptide is Xyloglucan-specific endo-beta-1,4-glucanase BoGH5A (Bacteroides ovatus (strain ATCC 8483 / DSM 1896 / JCM 5824 / BCRC 10623 / CCUG 4943 / NCTC 11153)).